The sequence spans 400 residues: CCA-adding enzyme (400 aa).

ATP-binding residues include Gly-28 and Arg-31. CTP-binding residues include Gly-28 and Arg-31. Residues Asp-41 and Asp-43 each contribute to the Mg(2+) site. Residues Arg-112, Asp-155, Arg-158, Arg-161, and Arg-164 each contribute to the ATP site. The CTP site is built by Arg-112, Asp-155, Arg-158, Arg-161, and Arg-164.

The protein belongs to the tRNA nucleotidyltransferase/poly(A) polymerase family. Bacterial CCA-adding enzyme type 3 subfamily. In terms of assembly, homodimer. Requires Mg(2+) as cofactor.

It carries out the reaction a tRNA precursor + 2 CTP + ATP = a tRNA with a 3' CCA end + 3 diphosphate. It catalyses the reaction a tRNA with a 3' CCA end + 2 CTP + ATP = a tRNA with a 3' CCACCA end + 3 diphosphate. Functionally, catalyzes the addition and repair of the essential 3'-terminal CCA sequence in tRNAs without using a nucleic acid template. Adds these three nucleotides in the order of C, C, and A to the tRNA nucleotide-73, using CTP and ATP as substrates and producing inorganic pyrophosphate. tRNA 3'-terminal CCA addition is required both for tRNA processing and repair. Also involved in tRNA surveillance by mediating tandem CCA addition to generate a CCACCA at the 3' terminus of unstable tRNAs. While stable tRNAs receive only 3'-terminal CCA, unstable tRNAs are marked with CCACCA and rapidly degraded. The protein is CCA-adding enzyme of Staphylococcus aureus (strain MSSA476).